Reading from the N-terminus, the 840-residue chain is Subtilisin-like protease SBT2.3 (840 aa).

The signal sequence occupies residues 1–27; the sequence is MVRVMLVRFGFLLLMISFVFLSNNTLG. The propeptide at 28–146 is activation peptide; sequence QQQDDDDDSA…IVLDYSVRTA (119 aa). Residues 38–146 form the Inhibitor I9 domain; sequence VYIVTLKQPP…IVLDYSVRTA (109 aa). Basic residues predominate over residues 61 to 81; the sequence is KSKFTPKLRPRNNSRKRHGKS. The interval 61 to 85 is disordered; sequence KSKFTPKLRPRNNSRKRHGKSKIPS. The N-linked (GlcNAc...) asparagine glycan is linked to Asn-72. The Peptidase S8 domain maps to 148-694; the sequence is TYTPQFMGLP…SGFVNATAAL (547 aa). Asp-180 (charge relay system) is an active-site residue. Asn-193 and Asn-241 each carry an N-linked (GlcNAc...) asparagine glycan. The active-site Charge relay system is His-255. 5 N-linked (GlcNAc...) asparagine glycosylation sites follow: Asn-398, Asn-427, Asn-480, Asn-525, and Asn-553. Positions 418 to 513 constitute a PA domain; that stretch reads MISAFHALNN…MDMPGIIIPS (96 aa). Residue Ser-619 is the Charge relay system of the active site. N-linked (GlcNAc...) asparagine glycans are attached at residues Asn-689, Asn-715, Asn-723, Asn-767, and Asn-808.

It belongs to the peptidase S8 family.

It localises to the secreted. The sequence is that of Subtilisin-like protease SBT2.3 from Arabidopsis thaliana (Mouse-ear cress).